The primary structure comprises 117 residues: Immunoglobulin kappa variable 1-27 (117 aa).

The first 22 residues, 1–22 (MDMRVPAQLLGLLLLWLPDTRC), serve as a signal peptide directing secretion. The segment at 23–45 (DIQMTQSPSSLSASVGDRVTITC) is framework-1. The Ig-like domain occupies 23–117 (DIQMTQSPSS…YYCQKYNSAP (95 aa)). A disulfide bridge links cysteine 45 with cysteine 110. Residues 46 to 56 (RASQGISNYLA) are complementarity-determining-1. A framework-2 region spans residues 57–71 (WYQQKPGKVPKLLIY). A complementarity-determining-2 region spans residues 72–78 (AASTLQS). The interval 79 to 110 (GVPSRFSGSGSGTDFTLTISSLQPEDVATYYC) is framework-3. Positions 111–117 (QKYNSAP) are complementarity-determining-3.

Immunoglobulins are composed of two identical heavy chains and two identical light chains; disulfide-linked.

The protein resides in the secreted. The protein localises to the cell membrane. Its function is as follows. V region of the variable domain of immunoglobulin light chains that participates in the antigen recognition. Immunoglobulins, also known as antibodies, are membrane-bound or secreted glycoproteins produced by B lymphocytes. In the recognition phase of humoral immunity, the membrane-bound immunoglobulins serve as receptors which, upon binding of a specific antigen, trigger the clonal expansion and differentiation of B lymphocytes into immunoglobulins-secreting plasma cells. Secreted immunoglobulins mediate the effector phase of humoral immunity, which results in the elimination of bound antigens. The antigen binding site is formed by the variable domain of one heavy chain, together with that of its associated light chain. Thus, each immunoglobulin has two antigen binding sites with remarkable affinity for a particular antigen. The variable domains are assembled by a process called V-(D)-J rearrangement and can then be subjected to somatic hypermutations which, after exposure to antigen and selection, allow affinity maturation for a particular antigen. This Homo sapiens (Human) protein is Immunoglobulin kappa variable 1-27.